Consider the following 207-residue polypeptide: LPS-assembly lipoprotein LptE (207 aa).

The first 19 residues, 1 to 19 (MRHRILMLLLGLAVLVTAG), serve as a signal peptide directing secretion. The N-palmitoyl cysteine moiety is linked to residue Cys-20. The S-diacylglycerol cysteine moiety is linked to residue Cys-20.

Belongs to the LptE lipoprotein family. Component of the lipopolysaccharide transport and assembly complex. Interacts with LptD.

It localises to the cell outer membrane. Together with LptD, is involved in the assembly of lipopolysaccharide (LPS) at the surface of the outer membrane. Required for the proper assembly of LptD. Binds LPS and may serve as the LPS recognition site at the outer membrane. The sequence is that of LPS-assembly lipoprotein LptE from Yersinia enterocolitica serotype O:8 / biotype 1B (strain NCTC 13174 / 8081).